The sequence spans 1682 residues: PHD and RING finger domain-containing protein 1 (1682 aa).

Positions 1-81 (MDDDNLDELV…SGSEDSEDGV (81 aa)) are disordered. Residues 41-81 (DSEDDTGSEQDDDTDGEETEGLSEEEDPEDRSGSEDSEDGV) are compositionally biased toward acidic residues. An RING-type; degenerate zinc finger spans residues 109–150 (CPICLNAFRDQAVGTPETCAHYFCLDCIIEWSRNANSCPVDR). The segment at 185-235 (PTFCEVCGRSDREDRLLLCDGCDAGYHMECLDPPLQEVPVDEWFCPECTVP) adopts a PHD-type zinc-finger fold. 5 disordered regions span residues 330–412 (PLTP…SMPS), 444–483 (PFDS…PVAM), 532–582 (SLSA…RQPN), 605–774 (VRSD…GSSF), and 825–856 (LKSE…GLLP). T332 is subject to Phosphothreonine. 2 stretches are compositionally biased toward basic residues: residues 336–361 (PAKR…RSSV) and 369–384 (RAKK…KGRK). Residues S447 and S457 each carry the phosphoserine modification. Composition is skewed to polar residues over residues 609–620 (PSLTPRSGLSRT), 630–667 (THSS…SGLP), and 734–748 (SSRG…TSGS). The segment covering 832–856 (PFDPTGSDSSPPSSSPESLGPGLLP) has biased composition (low complexity). A phosphoserine mark is found at S845, S846, S864, S867, S919, S982, and S1000. Disordered stretches follow at residues 911 to 1225 (SKGS…VSEV) and 1288 to 1322 (DDMS…PQDS). Over residues 919-931 (SDLEQEGLGEIEP) the composition is skewed to acidic residues. The segment covering 999–1008 (SSRSRSTSSS) has biased composition (low complexity). Composition is skewed to basic residues over residues 1009–1030 (RSRK…RTRS) and 1053–1063 (RRHRAKTKSRR). Positions 1064–1090 (SSSDRASSQDRAKRRKDRDDRDREHRR) are enriched in basic and acidic residues. Composition is skewed to basic residues over residues 1091-1104 (GSWG…KSRS) and 1119-1129 (SKRRKRRHSGS). S1135 carries the post-translational modification Phosphoserine. Composition is skewed to basic and acidic residues over residues 1147–1161 (RSRE…VTRS) and 1182–1197 (PSRE…KGPV). Position 1201 is a phosphoserine (S1201). The segment covering 1288-1301 (DDMSSPPSPESTDS) has biased composition (low complexity). Positions 1308–1317 (PPNPILPPAS) are enriched in pro residues. 2 positions are modified to phosphoserine: S1368 and S1379. Position 1412 is a phosphothreonine (T1412). Disordered regions lie at residues 1419–1445 (EHST…EGDW), 1463–1496 (LPPP…PAAG), 1567–1588 (AVPT…AEKT), and 1663–1682 (MRRH…GAET). Positions 1574–1588 (SEERTATPKTAAEKT) are enriched in basic and acidic residues. A coiled-coil region spans residues 1585–1612 (AEKTKKEEYMKKLHMQERAVEEVKLAIK).

Interacts with POLR2A (via the C-terminal domain).

The protein is PHD and RING finger domain-containing protein 1 of Mus musculus (Mouse).